Here is a 322-residue protein sequence, read N- to C-terminus: Eukaryotic translation initiation factor 3 subunit I (322 aa).

WD repeat units lie at residues 4–43 (GHER…RLGT), 46–85 (GHQG…IIAS), 141–180 (MTES…KVVD), 184–223 (DHTA…CLKT), and 281–322 (GHFG…NIFE).

Belongs to the eIF-3 subunit I family. As to quaternary structure, component of the eukaryotic translation initiation factor 3 (eIF-3) complex. The eIF-3 complex interacts with pix.

The protein resides in the cytoplasm. Its function is as follows. Component of the eukaryotic translation initiation factor 3 (eIF-3) complex, which is involved in protein synthesis of a specialized repertoire of mRNAs and, together with other initiation factors, stimulates binding of mRNA and methionyl-tRNAi to the 40S ribosome. The eIF-3 complex specifically targets and initiates translation of a subset of mRNAs involved in cell proliferation. This is Eukaryotic translation initiation factor 3 subunit I from Drosophila ananassae (Fruit fly).